The sequence spans 505 residues: Tyrosine-protein kinase isoform SRK1 (505 aa).

Polar residues-rich tracts occupy residues 1 to 10 and 18 to 31; these read MGSCCSSQDG and AGST…SQSV. The disordered stretch occupies residues 1–53; it reads MGSCCSSQDGDGNGKATAGSTVDSHELSQSVKGKIKQPEPKPKPPPQVPPAQD. Residues 54–116 enclose the SH3 domain; it reads VKYPIYVGKY…PSNYVAEYKS (63 aa). Residues 122–214 form the SH2 domain; it reads WFLGKIKRVE…GLCCKLLYPC (93 aa). The Protein kinase domain maps to 240-493; that stretch reads IKLLRRLGAG…TLQWQLEEFF (254 aa). ATP is bound by residues 246 to 254 and Lys268; that span reads LGAGQFGEV. Asp359 functions as the Proton acceptor in the catalytic mechanism.

The protein belongs to the protein kinase superfamily. Tyr protein kinase family. SRC subfamily.

The protein resides in the cytoplasm. It catalyses the reaction L-tyrosyl-[protein] + ATP = O-phospho-L-tyrosyl-[protein] + ADP + H(+). This is Tyrosine-protein kinase isoform SRK1 (SRK1) from Spongilla lacustris (Freshwater sponge).